Consider the following 153-residue polypeptide: Movement protein (153 aa).

Residues 107 to 153 (SSSARPLPQQPAPSLTSWTPIAKHLHSHQQSISSQSPKLVRGASQRR) are disordered.

Belongs to the luteoviruses movement protein family.

Transports viral genome to neighboring plant cells directly through plasmosdesmata, without any budding. The movement protein allows efficient cell to cell propagation, by bypassing the host cell wall barrier. The polypeptide is Movement protein (Avena byzantina (Oat)).